The primary structure comprises 178 residues: Cytochrome b6-f complex subunit 4 (178 aa).

3 helical membrane-spanning segments follow: residues Leu36 to Val56, Leu95 to Glu115, and Thr131 to Ile151.

Belongs to the cytochrome b family. PetD subfamily. In terms of assembly, the 4 large subunits of the cytochrome b6-f complex are cytochrome b6, subunit IV (17 kDa polypeptide, petD), cytochrome f and the Rieske protein, while the 4 small subunits are petG, petL, petM and petN. The complex functions as a dimer.

Its subcellular location is the plastid. The protein localises to the chloroplast thylakoid membrane. Functionally, component of the cytochrome b6-f complex, which mediates electron transfer between photosystem II (PSII) and photosystem I (PSI), cyclic electron flow around PSI, and state transitions. The sequence is that of Cytochrome b6-f complex subunit 4 from Picea abies (Norway spruce).